Here is a 265-residue protein sequence, read N- to C-terminus: Mlc titration factor A (265 aa).

Positions 111, 148, 152, and 211 each coordinate Zn(2+).

Belongs to the MtfA family. In terms of assembly, interacts with Mlc. Zn(2+) serves as cofactor.

The protein resides in the cytoplasm. Its function is as follows. Involved in the modulation of the activity of the glucose-phosphotransferase system (glucose-PTS). Interacts with the transcriptional repressor Mlc, preventing its interaction with DNA and leading to the modulation of expression of genes regulated by Mlc, including ptsG, which encodes the PTS system glucose-specific EIICB component. Shows zinc-dependent metallopeptidase activity. The polypeptide is Mlc titration factor A (Salmonella schwarzengrund (strain CVM19633)).